A 1004-amino-acid polypeptide reads, in one-letter code: uncharacterized protein (1004 aa).

Asparagine 27 carries an N-linked (GlcNAc...) asparagine glycan. The next 4 helical transmembrane spans lie at 38–58 (FGFS…LLAI), 77–97 (IVPD…LIVI), 188–208 (LSPV…LIAY), and 324–344 (FILM…SLFS). N-linked (GlcNAc...) asparagine glycans are attached at residues asparagine 392, asparagine 418, and asparagine 421. A run of 2 helical transmembrane segments spans residues 422-442 (MSLS…VIAF) and 599-619 (MSNI…IIDM). Asparagine 627 carries an N-linked (GlcNAc...) asparagine glycan. The next 2 helical transmembrane spans lie at 726-746 (GYPL…ISVF) and 823-843 (GDYI…VLGS). Residue asparagine 859 is glycosylated (N-linked (GlcNAc...) asparagine).

It to yeast YPR031w.

It is found in the membrane. This is an uncharacterized protein from Schizosaccharomyces pombe (strain 972 / ATCC 24843) (Fission yeast).